The primary structure comprises 314 residues: Dihydroorotate dehydrogenase (fumarate) (314 aa).

FMN is bound by residues alanine 21 and 45-46; that span reads KS. Residues lysine 45, 69-73, and asparagine 129 contribute to the substrate site; that span reads NSMGL. An FMN-binding site is contributed by asparagine 129. Catalysis depends on cysteine 132, which acts as the Nucleophile. Asparagine 134 contacts substrate. Residues lysine 166 and valine 195 each coordinate FMN. Residue 196-197 participates in substrate binding; it reads NS. Residues glycine 224, 251-252, and 273-274 contribute to the FMN site; these read GG and GT.

It belongs to the dihydroorotate dehydrogenase family. Type 1 subfamily. In terms of assembly, homodimer. FMN serves as cofactor.

The protein localises to the cytoplasm. It catalyses the reaction (S)-dihydroorotate + fumarate = orotate + succinate. The protein operates within pyrimidine metabolism; UMP biosynthesis via de novo pathway. Catalyzes the conversion of dihydroorotate to orotate with fumarate as the electron acceptor. Molecular oxygen can replace fumarate in vitro. The chain is Dihydroorotate dehydrogenase (fumarate) (pyr4) from Trypanosoma cruzi (strain CL Brener).